We begin with the raw amino-acid sequence, 298 residues long: Proline-rich protein 32 (298 aa).

The interval 36–56 (CLSSKPEDDAEPWGQPQVPLR) is disordered.

The chain is Proline-rich protein 32 (PRR32) from Homo sapiens (Human).